We begin with the raw amino-acid sequence, 82 residues long: Small ribosomal subunit protein bS18 (82 aa).

It belongs to the bacterial ribosomal protein bS18 family. In terms of assembly, part of the 30S ribosomal subunit. Forms a tight heterodimer with protein bS6.

In terms of biological role, binds as a heterodimer with protein bS6 to the central domain of the 16S rRNA, where it helps stabilize the platform of the 30S subunit. The polypeptide is Small ribosomal subunit protein bS18 (Chlamydia caviae (strain ATCC VR-813 / DSM 19441 / 03DC25 / GPIC) (Chlamydophila caviae)).